The primary structure comprises 388 residues: MIKNPKVLILTAHYGNGHVQVAKTLEQTFRQKGIEDVIVCDLFGESHPFITDITKYLYLKSYTIGKELYRLFYYGVEKIYDKKIASWYANFGRKRLKTLLQVEKPDIVINTFPIIAVPELKKQTGISIPVYNVLTDFCVHKIWIHREVDRYFVATDHVKELMVDIGVPAEQIVETGIPIRSSFELKVNPEIIYTKYQLCKNKKILLIVAGAHGVLGNVKELCQSFMSVPNLQIVVVCGKNEALKQDLLSLQKQNSDALKVFGYVENIDELFRVTSCMITKPGGITLSEAAALQVPVILYKPVPGQENENAMYFERKGAAVVIRDDSEVFAKTEALLQDDVKLLQMKEAMKSIYLPEPAGHIVDAILAENHAEPRHIPIKSPALAQSFT.

The protein belongs to the glycosyltransferase 28 family. UgtP subfamily.

The protein resides in the cell membrane. It carries out the reaction a 1,2-diacyl-3-O-(beta-D-glucopyranosyl)-sn-glycerol + UDP-alpha-D-glucose = a 1,2-diacyl-3-O-(beta-D-Glc-(1-&gt;6)-beta-D-Glc)-sn-glycerol + UDP + H(+). It catalyses the reaction a 1,2-diacyl-3-O-(beta-D-Glc-(1-&gt;6)-beta-D-Glc)-sn-glycerol + UDP-alpha-D-glucose = a 1,2-diacyl-3-O-(beta-D-Glc-(1-&gt;6)-beta-D-Glc-(1-&gt;6)-beta-D-Glc)-sn-glycerol + UDP + H(+). The catalysed reaction is a 1,2-diacyl-sn-glycerol + UDP-alpha-D-glucose = a 1,2-diacyl-3-O-(beta-D-glucopyranosyl)-sn-glycerol + UDP + H(+). The protein operates within glycolipid metabolism; diglucosyl-diacylglycerol biosynthesis. In terms of biological role, processive glucosyltransferase involved in the biosynthesis of both the bilayer- and non-bilayer-forming membrane glucolipids. Is able to successively transfer up to three glucosyl residues to diacylglycerol (DAG), thereby catalyzing the formation of beta-monoglucosyl-DAG (3-O-(beta-D-glucopyranosyl)-1,2-diacyl-sn-glycerol), beta-diglucosyl-DAG (3-O-(beta-D-glucopyranosyl-beta-(1-&gt;6)-D-glucopyranosyl)-1,2-diacyl-sn-glycerol) and beta-triglucosyl-DAG (3-O-(beta-D-glucopyranosyl-beta-(1-&gt;6)-D-glucopyranosyl-beta-(1-&gt;6)-D-glucopyranosyl)-1,2-diacyl-sn-glycerol). Beta-diglucosyl-DAG is the predominant glycolipid found in Bacillales and is also used as a membrane anchor for lipoteichoic acid (LTA). The protein is Processive diacylglycerol beta-glucosyltransferase of Bacillus cereus (strain B4264).